The following is a 94-amino-acid chain: Pyrimidine/purine nucleoside phosphorylase (94 aa).

Belongs to the nucleoside phosphorylase PpnP family.

The catalysed reaction is a purine D-ribonucleoside + phosphate = a purine nucleobase + alpha-D-ribose 1-phosphate. The enzyme catalyses adenosine + phosphate = alpha-D-ribose 1-phosphate + adenine. It catalyses the reaction cytidine + phosphate = cytosine + alpha-D-ribose 1-phosphate. It carries out the reaction guanosine + phosphate = alpha-D-ribose 1-phosphate + guanine. The catalysed reaction is inosine + phosphate = alpha-D-ribose 1-phosphate + hypoxanthine. The enzyme catalyses thymidine + phosphate = 2-deoxy-alpha-D-ribose 1-phosphate + thymine. It catalyses the reaction uridine + phosphate = alpha-D-ribose 1-phosphate + uracil. It carries out the reaction xanthosine + phosphate = alpha-D-ribose 1-phosphate + xanthine. Its function is as follows. Catalyzes the phosphorolysis of diverse nucleosides, yielding D-ribose 1-phosphate and the respective free bases. Can use uridine, adenosine, guanosine, cytidine, thymidine, inosine and xanthosine as substrates. Also catalyzes the reverse reactions. This chain is Pyrimidine/purine nucleoside phosphorylase, found in Pseudomonas fluorescens (strain ATCC BAA-477 / NRRL B-23932 / Pf-5).